The primary structure comprises 462 residues: Nitrate/nitrite transporter NarU (462 aa).

Residues Met1–Asn35 are Cytoplasmic-facing. A helical membrane pass occupies residues Leu36–Val56. The Periplasmic segment spans residues Thr57 to Thr76. The chain crosses the membrane as a helical span at residues Ala77–Phe97. The Cytoplasmic portion of the chain corresponds to Gly98–Arg101. The helical transmembrane segment at Trp102–Gln122 threads the bilayer. Over Asn123–Asn125 the chain is Periplasmic. Residues Thr126–Ala146 traverse the membrane as a helical segment. Over Ser147–Gln180 the chain is Cytoplasmic. The chain crosses the membrane as a helical span at residues Leu181–Pro201. Residues Gln202–Ser206 lie on the Periplasmic side of the membrane. Residues Val207–Ala227 form a helical membrane-spanning segment. Residues Ala228–Ser258 lie on the Cytoplasmic side of the membrane. A helical transmembrane segment spans residues Leu259–Ala279. Over Lys280–Asn287 the chain is Periplasmic. Residues Ile288–Ala308 form a helical membrane-spanning segment. At Ile309 to Arg317 the chain is on the cytoplasmic side. The helical transmembrane segment at Val318–Pro338 threads the bilayer. At Gly339–Asn344 the chain is on the periplasmic side. Residues Phe345–Ser365 form a helical membrane-spanning segment. The Cytoplasmic portion of the chain corresponds to Thr366–Ala401. The helical transmembrane segment at Ala402 to Phe422 threads the bilayer. Topologically, residues Gly423 to Pro432 are periplasmic. The chain crosses the membrane as a helical span at residues Val433 to Val453. Residues Tyr454–Lys462 are Cytoplasmic-facing.

Belongs to the major facilitator superfamily. Nitrate/nitrite porter (TC 2.A.1.8) family.

It localises to the cell inner membrane. Catalyzes nitrate uptake, nitrite uptake and nitrite export across the cytoplasmic membrane. May function as a nitrate/H(+) and nitrite/H(+) channel. Could confer a selective advantage during severe nutrient starvation or slow growth. The chain is Nitrate/nitrite transporter NarU (narU) from Escherichia coli (strain K12).